A 242-amino-acid polypeptide reads, in one-letter code: Large ribosomal subunit protein uL1 (242 aa).

Belongs to the universal ribosomal protein uL1 family. As to quaternary structure, part of the 50S ribosomal subunit.

Its function is as follows. Binds directly to 23S rRNA. The L1 stalk is quite mobile in the ribosome, and is involved in E site tRNA release. Functionally, protein L1 is also a translational repressor protein, it controls the translation of the L11 operon by binding to its mRNA. In Kitasatospora aureofaciens (Streptomyces aureofaciens), this protein is Large ribosomal subunit protein uL1.